Consider the following 203-residue polypeptide: FMN-dependent NADH:quinone oxidoreductase (203 aa).

FMN contacts are provided by residues Ser-9, 15-17 (SVS), and 138-141 (SRGG).

Belongs to the azoreductase type 1 family. As to quaternary structure, homodimer. FMN serves as cofactor.

The enzyme catalyses 2 a quinone + NADH + H(+) = 2 a 1,4-benzosemiquinone + NAD(+). The catalysed reaction is N,N-dimethyl-1,4-phenylenediamine + anthranilate + 2 NAD(+) = 2-(4-dimethylaminophenyl)diazenylbenzoate + 2 NADH + 2 H(+). Quinone reductase that provides resistance to thiol-specific stress caused by electrophilic quinones. Functionally, also exhibits azoreductase activity. Catalyzes the reductive cleavage of the azo bond in aromatic azo compounds to the corresponding amines. The chain is FMN-dependent NADH:quinone oxidoreductase from Methylorubrum extorquens (strain CM4 / NCIMB 13688) (Methylobacterium extorquens).